A 410-amino-acid chain; its full sequence is Centromere protein U (410 aa).

The tract at residues 1-72 (MAARRSLRYS…YETFDPPLHS (72 aa)) is disordered. Positions 4-21 (RRSLRYSGDPGAKRSRNT) match the Nuclear localization signal motif. The segment covering 28–38 (RKQKAGQKPKR) has biased composition (basic residues). Phosphothreonine; by PLK1 is present on Thr73. A disordered region spans residues 87-228 (SSTSPATHRG…THSDASESMH (142 aa)). Residues 101–115 (NLNPSENEASGNDSI) are compositionally biased toward polar residues. Ser105, Ser110, Ser114, Ser130, Ser133, and Ser135 each carry phosphoserine. Residues 138–149 (DNVRRSVSIERP) are compositionally biased toward basic and acidic residues. Residues 158 to 169 (PAAASSSSSPSE) are compositionally biased toward low complexity. Lys179 participates in a covalent cross-link: Glycyl lysine isopeptide (Lys-Gly) (interchain with G-Cter in SUMO2). A Phosphoserine modification is found at Ser186. Thr191 bears the Phosphothreonine mark. Residues 200-218 (TQKKVRPSPGRRKRPRRGS) are compositionally biased toward basic residues. Ser224 is subject to Phosphoserine. The stretch at 289 to 352 (QMLKALKRKN…LKNSKHFLSN (64 aa)) forms a coiled coil. Residues 295-312 (KRKNTKIISNMEKKRQRL) carry the Nuclear localization signal motif.

This sequence belongs to the CENP-U/AME1 family. In terms of assembly, component of the CENPA-NAC complex, at least composed of CENPA, CENPC, CENPH, CENPM, CENPN, CENPT and CENPU. The CENPA-NAC complex interacts with the CENPA-CAD complex, composed of CENPI, CENPK, CENPL, CENPO, CENPP, CENPQ, CENPR and CENPS. Interacts with MLF1. In terms of processing, phosphorylated by PLK1 at Thr-73, creating a self-tethering site that specifically interacts with the polo-box domain of PLK1. In terms of tissue distribution, expressed at high levels in glioblastoma cell lines. Up-regulated in GBM (glioblastoma multiforme) tumors. Significantly increased in both the tumor core as well as the contralateral striatum and cortex in gliomas.

The protein resides in the cytoplasm. It localises to the nucleus. The protein localises to the chromosome. It is found in the centromere. Its subcellular location is the kinetochore. Component of the CENPA-NAC (nucleosome-associated) complex, a complex that plays a central role in assembly of kinetochore proteins, mitotic progression and chromosome segregation. The CENPA-NAC complex recruits the CENPA-CAD (nucleosome distal) complex and may be involved in incorporation of newly synthesized CENPA into centromeres. Plays an important role in the correct PLK1 localization to the mitotic kinetochores. A scaffold protein responsible for the initial recruitment and maintenance of the kinetochore PLK1 population until its degradation. Involved in transcriptional repression. This Rattus norvegicus (Rat) protein is Centromere protein U (Cenpu).